The chain runs to 836 residues: Eukaryotic translation initiation factor 3 subunit C (836 aa).

The segment at 1-97 (MSRFFVSGYD…RRVVKSAKEK (97 aa)) is disordered. Acidic residues predominate over residues 13-55 (SSSEEEDLLTSSEEELMSSEQESDSEFDDEFANDDDSDSSDSD). Residues 86-97 (EGRRVVKSAKEK) are compositionally biased toward basic and acidic residues. The PCI domain occupies 586–761 (FHMHINLELL…KSINFVSSEH (176 aa)). Positions 783-817 (DKNEKTASNGHGRKTTQQQQQQQQKEQREQTHDEN) are disordered. Positions 797-806 (TTQQQQQQQQ) are enriched in low complexity. A compositionally biased stretch (basic and acidic residues) spans 807–817 (KEQREQTHDEN).

The protein belongs to the eIF-3 subunit C family. As to quaternary structure, component of the eukaryotic translation initiation factor 3 (eIF-3) complex.

It localises to the cytoplasm. In terms of biological role, component of the eukaryotic translation initiation factor 3 (eIF-3) complex, which is involved in protein synthesis of a specialized repertoire of mRNAs and, together with other initiation factors, stimulates binding of mRNA and methionyl-tRNAi to the 40S ribosome. The eIF-3 complex specifically targets and initiates translation of a subset of mRNAs involved in cell proliferation. The protein is Eukaryotic translation initiation factor 3 subunit C of Meyerozyma guilliermondii (strain ATCC 6260 / CBS 566 / DSM 6381 / JCM 1539 / NBRC 10279 / NRRL Y-324) (Yeast).